Here is a 1239-residue protein sequence, read N- to C-terminus: MVEPGQDLLLAALSESGISPNDLFDIDSPDVVLATPTPAVQQSVPLSALDLGLETEAPAAVKQEPETVSTPALLNVRQPPSTTTFVLNQINQLPTLGTTIVMTKTTPVTTTRQTITVAKIIQTSTTTRPSVAAPAVRNALTTAPSKDQIQLKDLLKNNSLNELMKLKPPPNIAQPVATAATDLSNGAVKKEASTKEVARIWINDVKMRSFSPTMKVPAVKEEEEPEEEDEEEMGHAETYAEYMPIKLKIGLRHPDPVVETSSLSSVTPPDVWYQTSISEETIDNGWLSALQLEAITYAAQQHETFLPNGDRAGFLIGDGAGVGKGRTIAGIIYENYLLGRKRAVWFSVSNDLKYDAERDLRDIGAKNILVHSLNKFKYGKISSKHNGSVKKGVIFATYSSLIGESQSGGKYKTRLKQLLHWCGEDFDGVIVFDECHKAKNLCPVGSSKPTKTGLAVLELQNKLPKARVVYASATGASEPRNMAYMNRLGIWGEGTPFREFSDFIQAVERRGVGAMEIVAMDMKLRGMYIARQLSFSGVTFKIDEVLLSQEYVKMYNKSVKLWVSARERFQQAADLIDAEQRMKKSMWGQFWSAHQRFFKYLCIASKVKRVVQLAREEIKNGKCVVIGLQSTGEARTLEALEEGGGELNDFVSTAKGVFQSLIEKHFPAPDRKKLFSLLGIDLTAQSNNNSPRDSPCKENKIKKRKGEEVSREAKKARKTGGLAGSSSDESESESDASDNEESDNESSRFLSSGDDDDFNPFRDESSEDDEDDPWLIRKEHKKVKEKKKKKSIDPDSIQSALLASGLGSKRPSCFTSTVGTTTSSTNASANSNTNSSFVTSQDAVERAQQMKKELLDKLEKLAEDLPPNTLDELIDELGGPENVAEMTGRKGRVVSNDDGSISYESRSELDVPVEILNITEKQRFMDGDKNIAIISEAASSGISLQADRRAKNQRRRVHMTLELPWSADRAIQQFGRTHRSNQVTAPEYVFLISELAGEQRFASIVAKRLESLGALTHGDRRATETRDLSRFNFDNKYGRNALEIVMKSIVNLDSPMVSPPPDFPGDFFKDVRQGLIGVGLINVEDRSGILTLDKDYNNIGKFLNRILGMEVHQQNALFQYFSDTLNAVIQNAKKNGRYDMGILDLGSGDEKVRKADVKKFLTPGYSTSGHVELYTISVERGMSWDEATKIWAEQTGPDDGFYLSLQIRNNKKTAILVKEVNPKKKLFWYTDQILGNNSN.

The interval 684 to 837 is disordered; it reads AQSNNNSPRD…SANSNTNSSF (154 aa). Residues 694–713 show a composition bias toward basic and acidic residues; sequence SPCKENKIKKRKGEEVSREA. Residues 728-744 show a composition bias toward acidic residues; sequence DESESESDASDNEESDN. Over residues 778 to 790 the composition is skewed to basic residues; that stretch reads KEHKKVKEKKKKK. Residues 814 to 837 show a composition bias toward low complexity; the sequence is FTSTVGTTTSSTNASANSNTNSSF. Residues 838-866 are a coiled coil; it reads VTSQDAVERAQQMKKELLDKLEKLAEDLP.

The protein belongs to the SBNO family.

Its subcellular location is the nucleus. Functionally, plays a crucial role in the regulation of neural stem cells (NSCs) proliferation. Enhances the phosphorylation of GSK3B through the PI3K-Akt signaling pathway, thereby upregulating the Wnt/beta-catenin signaling pathway and promoting the proliferation of NSCs. This Gallus gallus (Chicken) protein is Protein strawberry notch homolog 1 (SBNO1).